Here is a 57-residue protein sequence, read N- to C-terminus: Ribosome modulation factor 2 (57 aa).

The tract at residues 1-24 is disordered; it reads MKRQKRDKLGRAHSNGYQAGLGGK.

Belongs to the ribosome modulation factor family.

The protein localises to the cytoplasm. During stationary phase, converts 70S ribosomes to an inactive dimeric form (100S ribosomes). This Colwellia psychrerythraea (strain 34H / ATCC BAA-681) (Vibrio psychroerythus) protein is Ribosome modulation factor 2.